Here is a 71-residue protein sequence, read N- to C-terminus: Small integral membrane protein 31 (71 aa).

A helical transmembrane segment spans residues 8 to 28 (LEMAFILLAFVIFSLFTLASI). Residues 31-71 (TPDDSNEEEEHEKKGREKKRKKSEKKKNCSEEEHRIEAVEL) form a disordered region. The span at 46–55 (REKKRKKSEK) shows a compositional bias: basic residues. Residues 56 to 71 (KKNCSEEEHRIEAVEL) are compositionally biased toward basic and acidic residues. The N-linked (GlcNAc...) asparagine glycan is linked to Asn58.

Its subcellular location is the membrane. The sequence is that of Small integral membrane protein 31 from Homo sapiens (Human).